The primary structure comprises 151 residues: Spore coat polysaccharide biosynthesis protein SpsL (151 aa).

The protein to dTDP-4-dehydrorhamnose reductase.

It participates in spore coat biogenesis; spore coat polysaccharide biosynthesis. The polypeptide is Spore coat polysaccharide biosynthesis protein SpsL (spsL) (Bacillus subtilis (strain 168)).